The sequence spans 1259 residues: MLIKEYRIPLPLTVEEYRIAQLYMIAKKSREESHGEGSGVEIIINEPYKDGPGGNGQYTKKIYHVGNHLPGWIKSLLPKSALTVEEEAWNAYPYTRTRYTCPFVEKFSLDIETYYYPDNGYQDNVFQLSGSDLRNRIVDVIDIVKDQLWGGDYVKEEDPKHFVSDKTGRGPLAEDWLEEYWREVKGKKQPTPRNMSLMTAYKICRVEFRYWGMQTKLEKFIHDVALRKMMLRAHRQAWAWQDEWFGLTIEDIRELERQTQLALAKKMGGGEECSDDSVSEPYVSTAATAASTTGSERKKSAPAVPPIVTQQPPSAEASSDEEGEEEEDDDEDENDAIGTGVDLSANQGGSAQRSRSQSIQMAQKGKFGSKGALHSPVGSAHSFDLQVANWRMERLEVDSKSNSDEEFFDCLDTNETNSLAKWSSLELLGEGDDSPPPHGGPSSAASVGGRGNSRQEDSIFNQDFLMRVASERGNKRQLRSSASVDRSHDSSPPGSPSTPSCPTTILILVVHAGSVLDAASELTAKKSDVTTFRGSFEAVMRQHYPSLLTHVTIKMVPCPSICTDALGILSSLSPYSFDASPSAADIPNIADVPIGAIPLLSVASPEFHETVNKTVAAANIVYHEFLKSEEGHGFSGQIVMLGDSMGSLLAYEALCRSNGSQPGTASGASNSGGDAATNINTHNPLSPRNSRLDDDERFIEADLDAKRLLVAPSPRRRRSSSSSDSRATKLDFEVCDFFMFGSPLSVVLAARKLHDAKAALPRPNCHQVYNLFHPTDPIASRLEPLLSARFSILAPVNVPRYAKYPLGNGQPLHLLEVIQSHPQHFNDGNNLLAGRRLSDASMQSTISGLIENVSLSTIHALQNKWWGTKRLDYALYCPEGLSNFPAHALPHLFHASYWESPDVIAFILRQIGKFEGIPFVGSNDDKDNASFHPGQPREKWIKKRTSVKLKNVAANHRANDVIVQEGREQRLNARFMYGPLDMITLHGEKVDVHIMKDPPAGEWTFLSTEVTDKNGRISYSIPDQVSLGYGIYPVKMVVRGDHTSVDCYMAVVPPLTECVVFSIDGSFTASMSVTGRDPKVRAGAVDVCRHWQELGYLLIYITGRPDMQQQRVVSWLSQHNFPHGLISFADGLSTDPLGHKTAYLNNLVQNHGISITAAYGSSKDISVYTNVGMRTDQIFIVGKVGKKLQSNATVLSDGYAAHLAGLQAVGGSRPAKGNARMVIPRGCFNLPGQTANPRRRRYLERKTVSSCCLMVFQTT.

The segment at 268-378 (GGGEECSDDS…SKGALHSPVG (111 aa)) is disordered. Ser-274 and Ser-277 each carry phosphoserine. Residues 284–293 (STAATAASTT) are compositionally biased toward low complexity. The segment covering 318-335 (SSDEEGEEEEDDDEDEND) has biased composition (acidic residues). Residues 347-363 (QGGSAQRSRSQSIQMAQ) show a composition bias toward low complexity. Ser-401, Ser-403, and Ser-434 each carry phosphoserine. 3 disordered regions span residues 427–454 (LLGEGDDSPPPHGGPSSAASVGGRGNSR), 472–500 (RGNKRQLRSSASVDRSHDSSPPGSPSTPS), and 660–692 (SQPGTASGASNSGGDAATNINTHNPLSPRNSRL). Over residues 663–678 (GTASGASNSGGDAATN) the composition is skewed to low complexity. The segment covering 679-689 (INTHNPLSPRN) has biased composition (polar residues). The region spanning 730–913 (LDFEVCDFFM…IAFILRQIGK (184 aa)) is the DDHD domain.

It belongs to the PtdIns transfer protein family. PI transfer class IIA subfamily. In terms of tissue distribution, expressed in adult heads, not detected in bodies.

It catalyses the reaction a 1,2-diacyl-sn-glycero-3-phospho-(1D-myo-inositol)(in) = a 1,2-diacyl-sn-glycero-3-phospho-(1D-myo-inositol)(out). The catalysed reaction is a 1,2-diacyl-sn-glycero-3-phosphate(in) = a 1,2-diacyl-sn-glycero-3-phosphate(out). In terms of biological role, catalyzes the transfer of phosphatidylinositol (PI) and phosphatidic acid (PA) between membranes. May control phosphatidylinositol concentration in transport vesicles from the subrhabdomeric cisternae (SRC) to the rhabdomere. May function as a calcium transporter. The sequence is that of Protein retinal degeneration B (rdgB) from Drosophila melanogaster (Fruit fly).